We begin with the raw amino-acid sequence, 831 residues long: MutS protein homolog 5 (831 aa).

A disordered region spans residues 1–43 (MAFRATPGRTPPGPGPGVPSASFSSPQPAMAAPGGIEEEDEEE). Residue 589–596 (GPNSSGKS) participates in ATP binding.

It belongs to the DNA mismatch repair MutS family. Heterooligomer of MSH4 and MSH5. Interacts with HJURP. Interacts with C7h12orf40/REDIC1.

Involved in DNA mismatch repair and meiotic recombination processes. Facilitates crossovers between homologs during meiosis. This chain is MutS protein homolog 5 (Msh5), found in Rattus norvegicus (Rat).